Reading from the N-terminus, the 317-residue chain is Methionyl-tRNA formyltransferase (317 aa).

Residue 110–113 participates in (6S)-5,6,7,8-tetrahydrofolate binding; it reads SLLP.

The protein belongs to the Fmt family.

The enzyme catalyses L-methionyl-tRNA(fMet) + (6R)-10-formyltetrahydrofolate = N-formyl-L-methionyl-tRNA(fMet) + (6S)-5,6,7,8-tetrahydrofolate + H(+). Its function is as follows. Attaches a formyl group to the free amino group of methionyl-tRNA(fMet). The formyl group appears to play a dual role in the initiator identity of N-formylmethionyl-tRNA by promoting its recognition by IF2 and preventing the misappropriation of this tRNA by the elongation apparatus. The sequence is that of Methionyl-tRNA formyltransferase from Lactiplantibacillus plantarum (strain ATCC BAA-793 / NCIMB 8826 / WCFS1) (Lactobacillus plantarum).